The chain runs to 184 residues: ATP synthase subunit b, chloroplastic (184 aa).

The helical transmembrane segment at 27-49 threads the bilayer; that stretch reads LATNPINLSVVLGVLIFFGKGVL.

This sequence belongs to the ATPase B chain family. In terms of assembly, F-type ATPases have 2 components, F(1) - the catalytic core - and F(0) - the membrane proton channel. F(1) has five subunits: alpha(3), beta(3), gamma(1), delta(1), epsilon(1). F(0) has four main subunits: a(1), b(1), b'(1) and c(10-14). The alpha and beta chains form an alternating ring which encloses part of the gamma chain. F(1) is attached to F(0) by a central stalk formed by the gamma and epsilon chains, while a peripheral stalk is formed by the delta, b and b' chains.

The protein resides in the plastid. It is found in the chloroplast thylakoid membrane. In terms of biological role, f(1)F(0) ATP synthase produces ATP from ADP in the presence of a proton or sodium gradient. F-type ATPases consist of two structural domains, F(1) containing the extramembraneous catalytic core and F(0) containing the membrane proton channel, linked together by a central stalk and a peripheral stalk. During catalysis, ATP synthesis in the catalytic domain of F(1) is coupled via a rotary mechanism of the central stalk subunits to proton translocation. Component of the F(0) channel, it forms part of the peripheral stalk, linking F(1) to F(0). The sequence is that of ATP synthase subunit b, chloroplastic from Citrus sinensis (Sweet orange).